We begin with the raw amino-acid sequence, 390 residues long: RNA polymerase sigma factor SigA (390 aa).

A compositionally biased stretch (acidic residues) spans 48–57; sequence FLEPQTDEDD. A disordered region spans residues 48-75; sequence FLEPQTDEDDAKSGKAAKSRRRTQSKKK. A compositionally biased stretch (basic residues) spans 62–75; that stretch reads KAAKSRRRTQSKKK. A sigma-70 factor domain-2 region spans residues 158–228; sequence MVQSNLRLVV…TRAIADQSRT (71 aa). An Interaction with polymerase core subunit RpoC motif is present at residues 182 to 185; the sequence is DLIQ. The tract at residues 237 to 312 is sigma-70 factor domain-3; sequence ETISRIKKTT…ESDGETPEDQ (76 aa). The sigma-70 factor domain-4 stretch occupies residues 325-378; sequence VLDSLSPRERDVLRLRYGLDDGRMKTLEEIGQIFNVTRERIRQIEAKALRKLRH. A DNA-binding region (H-T-H motif) is located at residues 351-370; the sequence is LEEIGQIFNVTRERIRQIEA.

The protein belongs to the sigma-70 factor family. RpoD/SigA subfamily. As to quaternary structure, interacts transiently with the RNA polymerase catalytic core.

Its subcellular location is the cytoplasm. Its function is as follows. Sigma factors are initiation factors that promote the attachment of RNA polymerase to specific initiation sites and are then released. This sigma factor is the primary sigma factor during exponential growth. The chain is RNA polymerase sigma factor SigA from Nostoc sp. (strain PCC 7120 / SAG 25.82 / UTEX 2576).